Consider the following 268-residue polypeptide: Lipase (268 aa).

A signal peptide spans 1-34 (MRLSRRAATASALLLTPALALFGASAAVSAPRIQ). Serine 44 (nucleophile) is an active-site residue. 3 disulfide bridges follow: cysteine 61/cysteine 86, cysteine 127/cysteine 135, and cysteine 185/cysteine 232. The active site involves histidine 250.

Monomer.

It is found in the secreted. It carries out the reaction a triacylglycerol + H2O = a diacylglycerol + a fatty acid + H(+). The catalysed reaction is hexadecanoyl-CoA + H2O = hexadecanoate + CoA + H(+). Its activity is regulated as follows. Inhibited by 3,4-dichloroisocoumarin and tetrahydrolipstatin in the absence of substrate, but by phenylmethylsulfonyl fluoride (PMSF) only in the presence of substrate. Several water-miscible solvents enhance the lipase hydrolytic activity in vitro. Tetrahydrofuran and N,N-dimethylformamide (both 50%) inactivate the enzyme with t1/2 of 5 minutes and t1/2 of 2 hours, respectively. In terms of biological role, catalyzes the hydrolysis of p-nitrophenyl esters, alpha- and beta-naphthyl esters, and triacylglycerols, with a preference for medium acyl chain length (C8-C12). Shows a much higher hydrolysis rate of glycerol esters of unsaturated C16 and C18 fatty acids than that of their saturated counterparts, and a preference for cis double bond. Is also able to hydrolyze several natural oils and Tween detergents. Also displays thioesterase and phospholipase activities, towards palmitoyl-coenzyme A and diheptanoyl glycerophosphocholine, respectively. Shows transesterification activity of racemic 1-phenyl ethanol with vinyl acetate in hexane, proceeding with partial (R)-enantioselectivity. This Streptomyces rimosus protein is Lipase.